Here is a 296-residue protein sequence, read N- to C-terminus: L-fucono-1,5-lactonase (296 aa).

The protein belongs to the metallo-dependent hydrolases superfamily. In terms of assembly, monomer. The cofactor is Does not require a divalent metal for activity. The purified enzyme contains Zn(2+), but the addition of chelators does not diminish the catalytic activity of the enzyme, indicating that it does not require a divalent cation for substrate turnover..

The enzyme catalyses L-fucono-1,5-lactone + H2O = L-fuconate + H(+). The catalysed reaction is L-fucono-1,4-lactone + H2O = L-fuconate + H(+). It catalyses the reaction D-arabinono-1,4-lactone + H2O = D-arabinonate + H(+). It carries out the reaction L-xylono-1,4-lactone + H2O = L-xylonate + H(+). The enzyme catalyses L-galactono-1,4-lactone + H2O = L-galactonate + H(+). The protein operates within carbohydrate degradation; L-fucose degradation. L-fucono-1,5-lactonase involved in an L-fucose degradation pathway. Catalyzes the hydrolysis of L-fucono-1,5-lactone to L-fuconate. L-fucono-1,5-lactone is the best substrate, but the enzyme can also hydrolyze L-fucono-1,4-lactone, L-galactono-1,4-lactone D-arabinono-1,4-lactone and L-xylono-1,4-lactone. In Burkholderia multivorans (strain ATCC 17616 / 249), this protein is L-fucono-1,5-lactonase.